The following is a 223-amino-acid chain: Phosphoribosylformylglycinamidine synthase subunit PurQ (223 aa).

The Glutamine amidotransferase type-1 domain occupies 4–223 (FAVIVFPGTN…FKSIVEWMKK (220 aa)). Cys85 functions as the Nucleophile in the catalytic mechanism. Residues His196 and Glu198 contribute to the active site.

In terms of assembly, part of the FGAM synthase complex composed of 1 PurL, 1 PurQ and 2 PurS subunits.

The protein resides in the cytoplasm. It carries out the reaction N(2)-formyl-N(1)-(5-phospho-beta-D-ribosyl)glycinamide + L-glutamine + ATP + H2O = 2-formamido-N(1)-(5-O-phospho-beta-D-ribosyl)acetamidine + L-glutamate + ADP + phosphate + H(+). The catalysed reaction is L-glutamine + H2O = L-glutamate + NH4(+). It participates in purine metabolism; IMP biosynthesis via de novo pathway; 5-amino-1-(5-phospho-D-ribosyl)imidazole from N(2)-formyl-N(1)-(5-phospho-D-ribosyl)glycinamide: step 1/2. Functionally, part of the phosphoribosylformylglycinamidine synthase complex involved in the purines biosynthetic pathway. Catalyzes the ATP-dependent conversion of formylglycinamide ribonucleotide (FGAR) and glutamine to yield formylglycinamidine ribonucleotide (FGAM) and glutamate. The FGAM synthase complex is composed of three subunits. PurQ produces an ammonia molecule by converting glutamine to glutamate. PurL transfers the ammonia molecule to FGAR to form FGAM in an ATP-dependent manner. PurS interacts with PurQ and PurL and is thought to assist in the transfer of the ammonia molecule from PurQ to PurL. The chain is Phosphoribosylformylglycinamidine synthase subunit PurQ from Pyrococcus horikoshii (strain ATCC 700860 / DSM 12428 / JCM 9974 / NBRC 100139 / OT-3).